Consider the following 187-residue polypeptide: Ribosome-recycling factor (187 aa).

The protein belongs to the RRF family.

The protein localises to the cytoplasm. Responsible for the release of ribosomes from messenger RNA at the termination of protein biosynthesis. May increase the efficiency of translation by recycling ribosomes from one round of translation to another. The sequence is that of Ribosome-recycling factor from Rhodopseudomonas palustris (strain BisB5).